Reading from the N-terminus, the 529-residue chain is Nuclear protein localization protein 4 homolog 1 (529 aa).

The 138-residue stretch at 129-266 (IQIENQELVN…ITEYSMDRHY (138 aa)) folds into the MPN domain. The RanBP2-type zinc finger occupies 499 to 529 (SGGAVWNCGHCTFQNEAARQDCSMCGLPAAD).

It belongs to the NPL4 family. As to quaternary structure, forms a complex composed of ubxn-3, ufd-1, npl-4.1 and cdc-48.1; within the complex, interacts with ufd-1 and ubxn-3. Interacts with ufd-1. Interacts with elc-1/elongin C; the interaction may mediate the interaction between the npl-4-ufd-1-cdc-48 complex and the E3 ubiquitin ligase cul-2 complex.

Its subcellular location is the cytoplasm. It localises to the nucleus. Functionally, in association with ufd-1 and ATPase cdc-48.1 and/or cdc-48.2, involved in the cytoplasmic elimination of misfolded proteins exported from the ER. This pathway, known as ERAD, prevents the activation of the unfolded protein response (UPR) caused by the accumulation of misfolded proteins in the ER. During S phase and in association with ufd-1, cdc-48.1 and/or cdc-48.2 and ubxn-3, ensures the degradation of DNA licensing factor cdt-1 after the initiation of DNA replication and thus the disassembly of the DNA replication CGM helicase complex by promoting the dissociation from chromatin of several of its components including cdc-45 and sld-5. Regulates ubxn-3 nuclear localization during S phase. The polypeptide is Nuclear protein localization protein 4 homolog 1 (Caenorhabditis elegans).